The chain runs to 728 residues: Microtubule-associated protein VP5 (728 aa).

Belongs to the reoviridae microtubule-associated protein family.

It localises to the virion. Its subcellular location is the host cytoplasm. It is found in the host cytoskeleton. Its function is as follows. Minor inner capsid component. Displays NTPase and RNA 5'-triphosphatase (RTPase) activities. May function as a cofactor of polymerase. Associates with microtubules and plays a role in the formation, structural organization and morphology of viral inclusions, where the assembly of cores and the replication of viral RNA occur. This is Microtubule-associated protein VP5 (S5) from Aquareovirus C (isolate Golden shiner/USA/GSRV/1977) (AQRV-C).